We begin with the raw amino-acid sequence, 647 residues long: Beta-glucosidase-like SFR2, chloroplastic (647 aa).

A disordered region spans residues 116 to 140 (SAAGDGGSQQSWRSTGGENIGDREQ). The segment covering 123-132 (SQQSWRSTGG) has biased composition (polar residues). A glycan (N-linked (GlcNAc...) asparagine) is linked at Asn-169. Residues His-258, 302–303 (NE), Tyr-414, Glu-466, Trp-504, 511–512 (EW), and Phe-520 each bind a beta-D-glucoside. Glu-303 acts as the Proton donor in catalysis. The Nucleophile role is filled by Glu-466.

It belongs to the glycosyl hydrolase 1 family.

Its subcellular location is the plastid. It is found in the chloroplast outer membrane. It carries out the reaction 2 a 1,2-diacyl-3-O-(beta-D-galactosyl)-sn-glycerol = a 1,2-diacyl-3-O-[beta-D-galactosyl-(1-&gt;6)-beta-D-galactosyl]-sn-glycerol + a 1,2-diacyl-sn-glycerol. Its function is as follows. Galactosyltransferase synthesizing digalactosyldiacylglycerol from monogalactosyldiacylglycerol in the absence of UDP-galactose. Potentially involved in freezing tolerance. The chain is Beta-glucosidase-like SFR2, chloroplastic from Oryza sativa subsp. japonica (Rice).